A 176-amino-acid chain; its full sequence is Oligoribonuclease (176 aa).

The region spanning 2–159 (EMTGLNPETD…DDILESIEEM (158 aa)) is the Exonuclease domain. The active site involves tyrosine 117.

Belongs to the oligoribonuclease family.

The protein resides in the cytoplasm. In terms of biological role, 3'-to-5' exoribonuclease specific for small oligoribonucleotides. In Neisseria gonorrhoeae (strain ATCC 700825 / FA 1090), this protein is Oligoribonuclease.